A 231-amino-acid chain; its full sequence is Chromosome partition protein MukE (231 aa).

Positions 211–231 are disordered; sequence SLLADEEEQDYNEQAELEGEA. Acidic residues predominate over residues 214-231; it reads ADEEEQDYNEQAELEGEA.

This sequence belongs to the MukE family. As to quaternary structure, interacts, and probably forms a ternary complex, with MukF and MukB. The complex formation is stimulated by calcium or magnesium.

It is found in the cytoplasm. The protein localises to the nucleoid. Its function is as follows. Involved in chromosome condensation, segregation and cell cycle progression. May participate in facilitating chromosome segregation by condensation DNA from both sides of a centrally located replisome during cell division. Probably acts via its interaction with MukB and MukF. The sequence is that of Chromosome partition protein MukE from Vibrio vulnificus (strain CMCP6).